Reading from the N-terminus, the 177-residue chain is Macro domain-containing protein in non 5'region (177 aa).

One can recognise a Macro domain in the interval 1–177 (MSTSVSPVVR…VEFEEVLAMR (177 aa)).

The protein belongs to the MacroD-type family.

The polypeptide is Macro domain-containing protein in non 5'region (Streptomyces griseus).